A 445-amino-acid chain; its full sequence is Putrescine hydroxycinnamoyltransferase 1 (445 aa).

Catalysis depends on proton acceptor residues His-154 and Asp-388.

This sequence belongs to the plant acyltransferase family. In terms of tissue distribution, expressed in leaves.

Its function is as follows. Hydroxycinnamoyl transferase that catalyzes the transfer of an acyl from p-coumaryol-CoA to putrescine, to produce coumaroyl putrescine. The sequence is that of Putrescine hydroxycinnamoyltransferase 1 from Oryza sativa subsp. japonica (Rice).